Here is a 207-residue protein sequence, read N- to C-terminus: Gap junction epsilon-1 protein (207 aa).

The Cytoplasmic segment spans residues 1-22 (MSLNYIKNFYEGCLRPPTVIGQ). A helical membrane pass occupies residues 23-43 (FHTLFFGSVRTFFLGVLGFAV). At 44-74 (YGNEALHFSCDPDKRELNLYCYNQFRPITPQ) the chain is on the extracellular side. 2 disulfide bridges follow: cysteine 53-cysteine 161 and cysteine 64-cysteine 147. The chain crosses the membrane as a helical span at residues 75–95 (VFWALQLVTVLVPGAVFHLYA). At 96–111 (ACKNIDQEEILHRPMS) the chain is on the cytoplasmic side. The helical transmembrane segment at 112 to 132 (TVFYIISVLLRIILEVLAFWL) threads the bilayer. Over 133–175 (QSHLFGFLVDPIFMCDVTGLGKILNVSKCMVPEHFEKTIFLSA) the chain is Extracellular. Residues 176-196 (MYTFTIITILLCIAEIFEILF) form a helical membrane-spanning segment. Residues 197–207 (RRLGYLNQPMT) are Cytoplasmic-facing.

This sequence belongs to the connexin family. Beta-type (group I) subfamily. In terms of assembly, a connexon is composed of a hexamer of connexins.

The protein resides in the cell membrane. In terms of biological role, has significant hemichannel activity. However, has only low-efficiency gap junction activity and probably does not function as a gap junction channel in vivo. This is Gap junction epsilon-1 protein from Danio rerio (Zebrafish).